A 276-amino-acid chain; its full sequence is Formamidopyrimidine-DNA glycosylase (276 aa).

Proline 2 (schiff-base intermediate with DNA) is an active-site residue. The active-site Proton donor is the glutamate 3. Lysine 60 serves as the catalytic Proton donor; for beta-elimination activity. Residues arginine 113 and arginine 152 each coordinate DNA. The segment at 241-275 (NVFRKTGHPCPRCGHLIEKLIVAQRSTHICPICQK) adopts an FPG-type zinc-finger fold. The active-site Proton donor; for delta-elimination activity is arginine 265.

It belongs to the FPG family. As to quaternary structure, monomer. It depends on Zn(2+) as a cofactor.

The enzyme catalyses Hydrolysis of DNA containing ring-opened 7-methylguanine residues, releasing 2,6-diamino-4-hydroxy-5-(N-methyl)formamidopyrimidine.. It catalyses the reaction 2'-deoxyribonucleotide-(2'-deoxyribose 5'-phosphate)-2'-deoxyribonucleotide-DNA = a 3'-end 2'-deoxyribonucleotide-(2,3-dehydro-2,3-deoxyribose 5'-phosphate)-DNA + a 5'-end 5'-phospho-2'-deoxyribonucleoside-DNA + H(+). Functionally, involved in base excision repair of DNA damaged by oxidation or by mutagenic agents. Acts as a DNA glycosylase that recognizes and removes damaged bases. Has a preference for oxidized purines, such as 7,8-dihydro-8-oxoguanine (8-oxoG). Has AP (apurinic/apyrimidinic) lyase activity and introduces nicks in the DNA strand. Cleaves the DNA backbone by beta-delta elimination to generate a single-strand break at the site of the removed base with both 3'- and 5'-phosphates. In Protochlamydia amoebophila (strain UWE25), this protein is Formamidopyrimidine-DNA glycosylase.